Consider the following 218-residue polypeptide: Octanoyltransferase (218 aa).

Residues Ala-27–Thr-210 enclose the BPL/LPL catalytic domain. Residues Arg-72–His-79, Ser-139–Gly-141, and Gly-152–Ala-154 contribute to the substrate site. Cys-170 serves as the catalytic Acyl-thioester intermediate.

The protein belongs to the LipB family.

The protein resides in the cytoplasm. It carries out the reaction octanoyl-[ACP] + L-lysyl-[protein] = N(6)-octanoyl-L-lysyl-[protein] + holo-[ACP] + H(+). The protein operates within protein modification; protein lipoylation via endogenous pathway; protein N(6)-(lipoyl)lysine from octanoyl-[acyl-carrier-protein]: step 1/2. Functionally, catalyzes the transfer of endogenously produced octanoic acid from octanoyl-acyl-carrier-protein onto the lipoyl domains of lipoate-dependent enzymes. Lipoyl-ACP can also act as a substrate although octanoyl-ACP is likely to be the physiological substrate. The chain is Octanoyltransferase from Nitratidesulfovibrio vulgaris (strain DSM 19637 / Miyazaki F) (Desulfovibrio vulgaris).